Consider the following 674-residue polypeptide: Regulator of G-protein signaling 9 (674 aa).

Residues 30–105 (PETGVRMQNQ…PDGSLYRFQT (76 aa)) enclose the DEP domain. Residues 219 to 280 (KQTVVAVKKE…NPWITDDTQF (62 aa)) enclose the G protein gamma domain. In terms of domain architecture, RGS spans 298–413 (RWAFNFSELI…YARYLKSPIY (116 aa)). A disordered region spans residues 533 to 573 (SSGLEQKGECSGSMAPRGPSVTESSEASLDTSWPRSRPRAP). Residues 553–565 (VTESSEASLDTSW) are compositionally biased toward polar residues.

In terms of assembly, heterodimer with GNB5. Interacts with RGS7BP, leading to regulate the subcellular location of the heterodimer formed with GNB5. Component of the RGS9-1-Gbeta5 complex composed of RGS9 (RGS9-1), Gbeta5 (GNB5) and RGS9BP. Interacts with PDE6G and GNAT1. Post-translationally, retinal isoform 3 is light-dependent phosphorylated at 'Ser-478'. Phosphorylation is decreased by light exposition. Highly expressed in the caudate and putamen, lower levels found in the hypothalamus and nucleus accumbens and very low levels in cerebellum. Not expressed in globus pallidus or cingulate cortex. Isoform 2 is expressed predominantly in pineal gland and retina. Isoform 3 is expressed in retina (abundant in photoreceptors).

It is found in the membrane. Functionally, inhibits signal transduction by increasing the GTPase activity of G protein alpha subunits thereby driving them into their inactive GDP-bound form. Binds to GNAT1. Involved in phototransduction; key element in the recovery phase of visual transduction. The sequence is that of Regulator of G-protein signaling 9 (RGS9) from Homo sapiens (Human).